We begin with the raw amino-acid sequence, 90 residues long: PIK3R3 upstream open reading frame protein (90 aa).

A disordered region spans residues 1-63; the sequence is MGPSQLVRAP…PASEATNISD (63 aa). Residues 27–46 are compositionally biased toward basic residues; the sequence is PRRRCPSMFKCSRRTYRQKP. Residues 50 to 63 show a composition bias toward polar residues; it reads TATNPASEATNISD.

The polypeptide is PIK3R3 upstream open reading frame protein (Mus musculus (Mouse)).